A 702-amino-acid polypeptide reads, in one-letter code: NAD(P)H-quinone oxidoreductase subunit 5, chloroplastic (702 aa).

The next 16 membrane-spanning stretches (helical) occupy residues 7–27 (YVWI…LGLI), 40–60 (SAIL…TVLW), 91–111 (PLSA…MIYT), 124–144 (FFAY…SPNL), 147–167 (VYAF…FWFT), 189–209 (LLLG…DIVA), 224–244 (VLLT…SAQF), 258–278 (TPIS…YLVA), 289–309 (LVMD…ATVA), 327–347 (LGYM…FHLI), 354–374 (ALLF…VGYN), 395–415 (GVTF…ACFW), 427–447 (KLPV…FYMF), 511–531 (IPLI…APLP), 562–582 (FAIT…IAWI), and 680–700 (IFVL…FNFF).

This sequence belongs to the complex I subunit 5 family. NDH is composed of at least 16 different subunits, 5 of which are encoded in the nucleus.

The protein localises to the plastid. It is found in the chloroplast thylakoid membrane. It carries out the reaction a plastoquinone + NADH + (n+1) H(+)(in) = a plastoquinol + NAD(+) + n H(+)(out). The enzyme catalyses a plastoquinone + NADPH + (n+1) H(+)(in) = a plastoquinol + NADP(+) + n H(+)(out). NDH shuttles electrons from NAD(P)H:plastoquinone, via FMN and iron-sulfur (Fe-S) centers, to quinones in the photosynthetic chain and possibly in a chloroplast respiratory chain. The immediate electron acceptor for the enzyme in this species is believed to be plastoquinone. Couples the redox reaction to proton translocation, and thus conserves the redox energy in a proton gradient. The chain is NAD(P)H-quinone oxidoreductase subunit 5, chloroplastic (ndhF) from Zygnema circumcarinatum (Green alga).